Here is a 595-residue protein sequence, read N- to C-terminus: MPTVSVNKQQLFDLLGKNYTSQEFDELCFEFGMEMDEDTTEEALKTGEEPELKLDISANRYDLLCIEGISQSLNEYLERKERPDYKLSKPTTKLIIDKSTEQIRPFATAAVLRNIKLNEKSYASFIALQDKLHANLCRNRSLVAMGTHDLDSIEGPFHYRALPPKDIKFVPLNQTQEFTGDKLIEFYKSPEQKNNIGRYVHIIEDSPVFPVIMDSKDRVCSLPPLINSEHSKISVNTRNILIDITATDKTKAEIVLNILTTMFSRYCDEPFTVEPVEIVSEHNGQSRLAPNFNDRIMDVSIKYINSCLGLDQSADEIAHCLKKMSLHAVQSKEDKDILHVDIPVTRPDILHACDIMEDAAVGYGFNNLPKGEKLSNANFIAKPLPINKVSDIFRVASSQATWVEVLPLTLCSHDENFKFLRQSDNGDLAVKLANPKTLEYQVVRTTLLPGILKTVKENRKHSLPIKVFETGDVVFKDDKLERKAYNERHWAAIYVGKNSGFEIIQGLLGKIMQTFRTEWIADYGAAASGRGYWIEEDDSVKTYFPGRGAKVMFRSKEGAEPKQIGHLGVLHPEVMMNFDVPFAASFVEVNAEVFL.

Positions 86–90 (KLSKP) are 3'-CCA residue in tRNA. In terms of domain architecture, B5 spans 292-370 (FNDRIMDVSI…VGYGFNNLPK (79 aa)). Residues aspartate 348, aspartate 354, glutamate 357, and aspartate 358 each coordinate Mg(2+).

This sequence belongs to the phenylalanyl-tRNA synthetase beta subunit family. Type 2 subfamily. In terms of assembly, tetramer of two alpha and two beta subunits. It depends on Mg(2+) as a cofactor.

Its subcellular location is the cytoplasm. It carries out the reaction tRNA(Phe) + L-phenylalanine + ATP = L-phenylalanyl-tRNA(Phe) + AMP + diphosphate + H(+). The polypeptide is Phenylalanine--tRNA ligase beta subunit (FRS1) (Saccharomyces cerevisiae (strain ATCC 204508 / S288c) (Baker's yeast)).